The chain runs to 313 residues: Probable inactive peptidyl-prolyl cis-trans isomerase-like 6 (313 aa).

Positions 147 to 310 constitute a PPIase cyclophilin-type domain; it reads YLDICIDLSP…LLCSIADSGV (164 aa).

It belongs to the cyclophilin-type PPIase family.

Probable inactive PPIase with no peptidyl-prolyl cis-trans isomerase activity. The protein is Probable inactive peptidyl-prolyl cis-trans isomerase-like 6 of Mus musculus (Mouse).